Here is a 260-residue protein sequence, read N- to C-terminus: DNA repair protein RecO (260 aa).

Residues S239–Q260 form a disordered region.

The protein belongs to the RecO family.

Functionally, involved in DNA repair and RecF pathway recombination. This is DNA repair protein RecO from Sodalis glossinidius (strain morsitans).